The primary structure comprises 399 residues: Succinate--CoA ligase [ADP-forming] subunit beta (399 aa).

Positions 9-254 constitute an ATP-grasp domain; sequence KAVLAEFGVA…ESEEDPKEIE (246 aa). ATP-binding positions include lysine 46, 53–55, glutamate 109, alanine 112, and glutamate 117; that span reads GRG. Residues asparagine 209 and aspartate 223 each coordinate Mg(2+). Substrate contacts are provided by residues asparagine 274 and 331-333; that span reads GIM.

It belongs to the succinate/malate CoA ligase beta subunit family. In terms of assembly, heterotetramer of two alpha and two beta subunits. The cofactor is Mg(2+).

The catalysed reaction is succinate + ATP + CoA = succinyl-CoA + ADP + phosphate. It carries out the reaction GTP + succinate + CoA = succinyl-CoA + GDP + phosphate. It participates in carbohydrate metabolism; tricarboxylic acid cycle; succinate from succinyl-CoA (ligase route): step 1/1. Functionally, succinyl-CoA synthetase functions in the citric acid cycle (TCA), coupling the hydrolysis of succinyl-CoA to the synthesis of either ATP or GTP and thus represents the only step of substrate-level phosphorylation in the TCA. The beta subunit provides nucleotide specificity of the enzyme and binds the substrate succinate, while the binding sites for coenzyme A and phosphate are found in the alpha subunit. The chain is Succinate--CoA ligase [ADP-forming] subunit beta from Phenylobacterium zucineum (strain HLK1).